The sequence spans 522 residues: ARS-binding protein 1 (522 aa).

Residues 70-144 (DVKRNRPPKY…RKRHILHAIN (75 aa)) enclose the HTH CENPB-type domain. T460 carries the phosphothreonine modification.

In terms of assembly, interacts with mcm10.

Its subcellular location is the nucleus. Functionally, binds, preferentially, to the Maundrell ARS consensus sequence within ARS3002. The polypeptide is ARS-binding protein 1 (abp1) (Schizosaccharomyces pombe (strain 972 / ATCC 24843) (Fission yeast)).